The following is a 260-amino-acid chain: Meiotic recombination protein rec6 (260 aa).

The segment at 197–222 is disordered; that stretch reads QYSESSLLDDSQLLCSSPPVDSTEEA. The span at 199-213 shows a compositional bias: low complexity; that stretch reads SESSLLDDSQLLCSS.

Belongs to the TOP6B-like family. As to quaternary structure, component of the DSB catalytic core (DSBC) complex, composed of at least rec12, rec6 and rec14. The complex interacts with mde2.

Required for formation of the rec12-mediated double-strand breaks (DSBs) that initiate meiotic recombination. May be involved primarily in the early steps of meiotic recombination. This chain is Meiotic recombination protein rec6, found in Schizosaccharomyces pombe (strain 972 / ATCC 24843) (Fission yeast).